Here is a 517-residue protein sequence, read N- to C-terminus: B3 domain-containing protein REM1 (517 aa).

Positions 7–92 (FSLFQQKFRT…VFHVAVVSPS (86 aa)) form a DNA-binding region, TF-B3 1. Residues 115 to 140 (DDVDDDDYGQDDEDDDDDDDEGEDNI) show a composition bias toward acidic residues. Residues 115–158 (DDVDDDDYGQDDEDDDDDDDEGEDNIENISEKTDKRQEADSSSD) form a disordered region. Over residues 143-157 (ISEKTDKRQEADSSS) the composition is skewed to basic and acidic residues. 2 DNA-binding regions (TF-B3) span residues 162-259 (FITA…CPQE) and 285-385 (FLIV…FCSK). A disordered region spans residues 393 to 415 (GKGNQRTRKKRACETAPQPRNVK).

Expressed in the shoot apical meristem (SAM), in the inflorescence apex and flowers.

The protein localises to the nucleus. Its function is as follows. May play a role in flower development. In Arabidopsis thaliana (Mouse-ear cress), this protein is B3 domain-containing protein REM1 (REM1).